The chain runs to 398 residues: Phospholipase C (398 aa).

Residues 1 to 28 (MKRKIYKLLICATIATSLWAVRTTKVYA) form the signal peptide. Zn(2+) contacts are provided by Trp29, His39, Asp84, His96, His154, Asp158, His164, His176, and Glu180. Positions 29–278 (WDGKADGTGT…HDVSDGKDSS (250 aa)) constitute a Zn-dependent PLC domain. The tract at residues 275–283 (KDSSANKNV) is linker. Positions 284–398 (NELVAYITTG…ISGNSTYNIK (115 aa)) constitute a PLAT domain. Ca(2+)-binding residues include Gly299, Thr300, Asp301, Asp321, Asn322, Gly324, Asn325, Asp326, and Asp365.

The cofactor is Ca(2+). It depends on Zn(2+) as a cofactor.

Its subcellular location is the secreted. It carries out the reaction a 1,2-diacyl-sn-glycero-3-phosphocholine + H2O = phosphocholine + a 1,2-diacyl-sn-glycerol + H(+). In terms of biological role, bacterial hemolysins are exotoxins that attack blood cell membranes and cause cell rupture. Constitutes an essential virulence factor in gas gangrene. Binds to eukaryotic membranes where it hydrolyzes both phosphatidylcholine and sphingomyelin, causing cell rupture. The diacylglycerol produced can activate both the arachidonic acid pathway, leading to modulation of the inflammatory response cascade and thrombosis, and protein kinase C, leading to activation of eukaryotic phospholipases and further membrane damage. The protein is Phospholipase C (plc) of Clostridium perfringens.